The chain runs to 146 residues: Anti-sigma F factor (146 aa).

This sequence belongs to the anti-sigma-factor family.

It carries out the reaction L-seryl-[protein] + ATP = O-phospho-L-seryl-[protein] + ADP + H(+). It catalyses the reaction L-threonyl-[protein] + ATP = O-phospho-L-threonyl-[protein] + ADP + H(+). Its function is as follows. Binds to sigma F and blocks its ability to form an RNA polymerase holoenzyme (E-sigma F). Phosphorylates SpoIIAA on a serine residue. This phosphorylation may enable SpoIIAA to act as an anti-anti-sigma factor that counteracts SpoIIAB and thus releases sigma F from inhibition. This chain is Anti-sigma F factor, found in Geobacillus kaustophilus (strain HTA426).